The primary structure comprises 197 residues: Ribonuclease HII (197 aa).

The 189-residue stretch at 9-197 folds into the RNase H type-2 domain; that stretch reads ELIAGVDEVG…APVKKALEQF (189 aa). A divalent metal cation-binding residues include aspartate 15, glutamate 16, and aspartate 107.

Belongs to the RNase HII family. It depends on Mn(2+) as a cofactor. Requires Mg(2+) as cofactor.

It localises to the cytoplasm. It carries out the reaction Endonucleolytic cleavage to 5'-phosphomonoester.. In terms of biological role, endonuclease that specifically degrades the RNA of RNA-DNA hybrids. In Haemophilus influenzae (strain 86-028NP), this protein is Ribonuclease HII.